We begin with the raw amino-acid sequence, 411 residues long: Arginine deiminase (411 aa).

Residue Cys-401 is the Amidino-cysteine intermediate of the active site.

Belongs to the arginine deiminase family.

Its subcellular location is the cytoplasm. It catalyses the reaction L-arginine + H2O = L-citrulline + NH4(+). It functions in the pathway amino-acid degradation; L-arginine degradation via ADI pathway; carbamoyl phosphate from L-arginine: step 1/2. The protein is Arginine deiminase of Streptococcus pyogenes serotype M2 (strain MGAS10270).